A 677-amino-acid chain; its full sequence is Gamma-tubulin complex subunit mod21 (677 aa).

Component of the gamma-tubulin complex composed of at least alp4, alp6, alp16, ghf1, gtb1 and mod21.

The protein localises to the cytoplasm. Its subcellular location is the cytoskeleton. It is found in the microtubule organizing center. The protein resides in the spindle pole body. Component of the gamma-tubulin complex that is required for the regulation of both interphase microtubule organization and nucleation, and mitotic bipolar spindles. Required for correct septation. The chain is Gamma-tubulin complex subunit mod21 from Schizosaccharomyces pombe (strain 972 / ATCC 24843) (Fission yeast).